The following is a 382-amino-acid chain: Kelch domain-containing protein 3 (382 aa).

5 Kelch repeats span residues 25-77, 88-138, 139-189, 191-249, and 251-301; these read RVYS…PYMR, TVFL…VLGK, IMYI…TMLG, HMYV…GYNG, and LYIF…IVGD.

Component of a CRL2(KLHDC3) complex, also named ECS(KLHDC3) complex, composed of CUL2, Elongin BC (ELOB and ELOC), RBX1 and substrate-specific adapter KLHDC3. May form oligomers as a KLHDC3-ELOB-ELOC complex; this interaction is likely autoinhibitory for the E3 ligase complex.

The protein localises to the cytoplasm. The protein operates within protein modification; protein ubiquitination. In terms of biological role, substrate-recognition component of a Cul2-RING (CRL2) E3 ubiquitin-protein ligase complex of the DesCEND (destruction via C-end degrons) pathway, which recognizes a C-degron located at the extreme C terminus of target proteins, leading to their ubiquitination and degradation. The C-degron recognized by the DesCEND pathway is usually a motif of less than ten residues and can be present in full-length proteins, truncated proteins or proteolytically cleaved forms. The CRL2(KLHDC3) complex specifically recognizes proteins with a glycine (Gly) at the C-terminus, leading to their ubiquitination and degradation: recognizes the C-terminal -Arg-(Xaa)n-Arg-Gly, -Arg-(Xaa)n-Lys-Gly, and -Arg-(Xaa)n-Gln-Gly degrons. The CRL2(KLHDC3) complex mediates ubiquitination and degradation of truncated SELENOV and SEPHS2 selenoproteins produced by failed UGA/Sec decoding, which end with a glycine. May be involved in meiotic recombination process. This Rattus norvegicus (Rat) protein is Kelch domain-containing protein 3.